A 190-amino-acid chain; its full sequence is ATP synthase subunit b 1 (190 aa).

The chain crosses the membrane as a helical span at residues 35–55; it reads DFVVLLGFLLFLAILFYFGVP.

This sequence belongs to the ATPase B chain family. In terms of assembly, F-type ATPases have 2 components, F(1) - the catalytic core - and F(0) - the membrane proton channel. F(1) has five subunits: alpha(3), beta(3), gamma(1), delta(1), epsilon(1). F(0) has three main subunits: a(1), b(2) and c(10-14). The alpha and beta chains form an alternating ring which encloses part of the gamma chain. F(1) is attached to F(0) by a central stalk formed by the gamma and epsilon chains, while a peripheral stalk is formed by the delta and b chains.

The protein localises to the cell inner membrane. Functionally, f(1)F(0) ATP synthase produces ATP from ADP in the presence of a proton or sodium gradient. F-type ATPases consist of two structural domains, F(1) containing the extramembraneous catalytic core and F(0) containing the membrane proton channel, linked together by a central stalk and a peripheral stalk. During catalysis, ATP synthesis in the catalytic domain of F(1) is coupled via a rotary mechanism of the central stalk subunits to proton translocation. Component of the F(0) channel, it forms part of the peripheral stalk, linking F(1) to F(0). This Jannaschia sp. (strain CCS1) protein is ATP synthase subunit b 1.